A 137-amino-acid polypeptide reads, in one-letter code: Cell division protein SepF (137 aa).

It belongs to the SepF family. Homodimer. Interacts with FtsZ.

It is found in the cytoplasm. In terms of biological role, cell division protein that is part of the divisome complex and is recruited early to the Z-ring. Probably stimulates Z-ring formation, perhaps through the cross-linking of FtsZ protofilaments. Its function overlaps with FtsA. This chain is Cell division protein SepF, found in Carboxydothermus hydrogenoformans (strain ATCC BAA-161 / DSM 6008 / Z-2901).